The primary structure comprises 102 residues: Small ribosomal subunit protein eS24 (102 aa).

The protein belongs to the eukaryotic ribosomal protein eS24 family.

The chain is Small ribosomal subunit protein eS24 from Methanococcoides burtonii (strain DSM 6242 / NBRC 107633 / OCM 468 / ACE-M).